The sequence spans 114 residues: Class I hydrophobin 6 (114 aa).

A signal peptide spans 1-19; sequence MLFKQLILVATALTTLAVA. 4 disulfides stabilise this stretch: Cys-33/Cys-93, Cys-40/Cys-87, Cys-41/Cys-74, and Cys-94/Cys-107. N-linked (GlcNAc...) asparagine glycosylation is present at Asn-42.

The protein belongs to the fungal hydrophobin family. As to quaternary structure, self-assembles to form functional amyloid fibrils called rodlets. Self-assembly into fibrillar rodlets occurs spontaneously at hydrophobic:hydrophilic interfaces and the rodlets further associate laterally to form amphipathic monolayers.

It localises to the secreted. It is found in the cell wall. Its function is as follows. Aerial growth, conidiation, and dispersal of filamentous fungi in the environment rely upon a capability of their secreting small amphipathic proteins called hydrophobins (HPBs) with low sequence identity. Class I can self-assemble into an outermost layer of rodlet bundles on aerial cell surfaces, conferring cellular hydrophobicity that supports fungal growth, development and dispersal; whereas Class II form highly ordered films at water-air interfaces through intermolecular interactions but contribute nothing to the rodlet structure. This chain is Class I hydrophobin 6, found in Pleurotus ostreatus (strain PC15) (Oyster mushroom).